We begin with the raw amino-acid sequence, 565 residues long: Sulfite reductase [NADPH] hemoprotein beta-component (565 aa).

Positions 429, 435, 474, and 478 each coordinate [4Fe-4S] cluster. Cys-478 provides a ligand contact to siroheme.

Belongs to the nitrite and sulfite reductase 4Fe-4S domain family. Alpha(8)-beta(8). The alpha component is a flavoprotein, the beta component is a hemoprotein. It depends on siroheme as a cofactor. [4Fe-4S] cluster serves as cofactor.

The enzyme catalyses hydrogen sulfide + 3 NADP(+) + 3 H2O = sulfite + 3 NADPH + 4 H(+). Its pathway is sulfur metabolism; hydrogen sulfide biosynthesis; hydrogen sulfide from sulfite (NADPH route): step 1/1. Its function is as follows. Component of the sulfite reductase complex that catalyzes the 6-electron reduction of sulfite to sulfide. This is one of several activities required for the biosynthesis of L-cysteine from sulfate. The sequence is that of Sulfite reductase [NADPH] hemoprotein beta-component from Shewanella loihica (strain ATCC BAA-1088 / PV-4).